Here is a 1845-residue protein sequence, read N- to C-terminus: Vacuolar membrane-associated protein iml1 (1845 aa).

Positions 1–12 are enriched in basic residues; it reads MSLRGPMKRSHL. Disordered regions lie at residues 1–48, 547–566, 732–822, and 854–982; these read MSLR…HGQD, PHLS…TAHK, KRRH…GKAP, and SALP…SPQN. The span at 24-33 shows a compositional bias: polar residues; it reads ATSSQAQAQS. Basic and acidic residues predominate over residues 34 to 47; sequence HPRDGGPYNDEHGQ. Basic residues predominate over residues 732-743; it reads KRRHQRKPSKPK. Over residues 755–772 the composition is skewed to basic and acidic residues; the sequence is AHERLSARSVLRLREHET. 2 stretches are compositionally biased toward low complexity: residues 801 to 822 and 874 to 886; these read VPSK…GKAP and VDSF…ASIS. Residues 969-982 show a composition bias toward polar residues; sequence NGGSRDSSIKSPQN. Positions 1344–1419 constitute a DEP domain; it reads GDKGVRMMDR…DGNYFYQISS (76 aa). Disordered regions lie at residues 1425-1483 and 1825-1845; these read RPES…KNKA and NDSV…LNLS.

The protein belongs to the IML1 family.

It localises to the vacuole membrane. The chain is Vacuolar membrane-associated protein iml1 (iml1) from Aspergillus clavatus (strain ATCC 1007 / CBS 513.65 / DSM 816 / NCTC 3887 / NRRL 1 / QM 1276 / 107).